The following is a 4069-amino-acid chain: Cardiomyopathy-associated protein 5 (4069 aa).

Disordered stretches follow at residues 1-177 (MASR…SQVL), 341-387 (TVPS…DTPA), 442-525 (GLAA…EDSN), 538-558 (ESPL…VEHK), 597-705 (EYSV…VPSL), 732-793 (PSEE…RFTP), 844-872 (SSPD…APPL), 890-948 (LERY…FSPD), 979-1009 (TSPS…VSIP), 1041-1097 (ADEE…PEIP), 1160-1179 (VKEE…SVPA), 1205-1237 (RKEE…PESE), 1540-1575 (KETE…ELEN), 1594-1742 (PAVE…EEFQ), 1757-1809 (HPAD…ITEP), 1892-1988 (ENWM…VKLA), 2064-2175 (TISS…KKGI), 2187-2259 (FGSS…SGDG), 2385-2412 (PQQP…SIIL), 2425-2463 (SEDR…LENR), 2494-2527 (TQIT…NERP), 2653-2706 (QEGN…VGTQ), and 2750-2862 (SSRD…SDVP). Positions 27–47 (ETEEESEGEEDETAAESEEEP) are enriched in acidic residues. The segment covering 48–62 (DSRLSDQDEEGKIKQ) has biased composition (basic and acidic residues). Positions 84-119 (TWETNSSRSSTPWASEESQTSGVCSREGSTVNSPPG) are enriched in polar residues. A compositionally biased stretch (basic residues) spans 130-153 (KVRKRTHKSKHGSPSLRRKGNRKR). Residue S155 is modified to Phosphoserine. Polar residues-rich tracts occupy residues 156–177 (FESQ…SQVL) and 341–350 (TVPSYSSSGR). A compositionally biased stretch (low complexity) spans 489–499 (LEPSISLSEPL). Over residues 500–510 (MLEEPEKEEIE) the composition is skewed to acidic residues. S631 carries the post-translational modification Phosphoserine. The span at 640-659 (AYSPAAAPTSESSLSPSTTE) shows a compositional bias: low complexity. 3 stretches are compositionally biased toward polar residues: residues 664–673 (NQSPLFSTVT), 692–701 (PDSTSASEYS), and 752–775 (PSLS…TATS). Polar residues predominate over residues 1049–1063 (TAATPVSEQFSSSQK). Positions 1085-1094 (DKSEKAEIKP) are enriched in basic and acidic residues. Positions 1214–1223 (QEATAHVSQD) are enriched in polar residues. Residues 1621–1630 (EPEKKDKPHQ) show a composition bias toward basic and acidic residues. Positions 1639 to 1662 (SEFSSDLGRQSGSIGTKQAKSPIT) are enriched in polar residues. Composition is skewed to basic and acidic residues over residues 1668 to 1687 (VLEK…ENRE), 1704 to 1714 (LREESQNEEIK), and 1786 to 1795 (ILDKLSEETG). A compositionally biased stretch (polar residues) spans 1796–1808 (HPNSSQVLQSITE). Residues 1935-1955 (SKDHTCEVRKQVLPHSAEESH) are compositionally biased toward basic and acidic residues. The segment covering 1956–1980 (LSSQEAVSALDTSSGNTETLSSKSY) has biased composition (polar residues). Residues 2085–2124 (NEKEAHRSTPPFPEEKPLEESKMVQSKVIDDADEGKKPSP) show a composition bias toward basic and acidic residues. Residues 2145 to 2155 (SPESPEVTQNP) show a composition bias toward polar residues. 2 stretches are compositionally biased toward basic and acidic residues: residues 2162–2172 (AKPDLPEEKGK) and 2232–2250 (KPAD…DEPR). Residues 2387 to 2399 (QPKSASSNFASKN) show a composition bias toward polar residues. Phosphoserine is present on S2404. The segment covering 2441-2461 (ISEEETKLRSVSPTEKKDNLE) has biased composition (basic and acidic residues). Basic and acidic residues-rich tracts occupy residues 2661–2681 (KSSR…ESEL), 2750–2769 (SSRD…ESEL), and 2777–2804 (ITKE…ETKS). Position 2813 is a phosphoserine (S2813). The span at 2830–2847 (AVKKKEMPRSELTPERHT) shows a compositional bias: basic and acidic residues. Residues 2964 to 2988 (SIDQEESEQMQDKLEYLEEKASFKT) are a coiled coil. The segment covering 3015–3031 (PLKENKQKETHKTKEEI) has biased composition (basic and acidic residues). Disordered stretches follow at residues 3015 to 3037 (PLKE…DSET), 3119 to 3156 (EKGH…PGMP), 3204 to 3231 (KKKE…SDTD), 3386 to 3421 (SGAT…QDEY), and 3465 to 3495 (EFAS…SSEV). Residues 3052–3365 (YFEKYTLIDY…GSHGNEVGNA (314 aa)) form a required for RYR2 clustering region. The segment covering 3128–3138 (PETQSQNSADR) has biased composition (polar residues). The span at 3139–3150 (NVSKDTKRDVDS) shows a compositional bias: basic and acidic residues. A compositionally biased stretch (polar residues) spans 3213–3227 (EGDSVNSEASFPSRN). S3228 carries the phosphoserine modification. Residues 3477-3489 (EQKELGSERKEED) show a composition bias toward basic and acidic residues. Residues 3517-3544 (KCPISATDKVFGTHKDHEVSTLDTAISA) form an amphipathic helix H1 region. Residues 3544–3653 (AVKVQLAEFL…REAEELDEAV (110 aa)) adopt a coiled-coil conformation. Residues 3545–3672 (VKVQLAEFLE…ERLLSAMEST (128 aa)) are B-box coiled-coil; BBC. The segment at 3631-3648 (SMDTAKDTLETIVREAEE) is amphipathic helix H2. Fibronectin type-III domains lie at 3704–3805 (VPQP…TAPS) and 3806–3898 (TPVI…TRGT). An amphipathic helix H3 region spans residues 3751 to 3767 (EVNELVEEYRLTVKESY). A B30.2/SPRY domain is found at 3880–4065 (NAFGTSEQSE…LHLGIEPPDS (186 aa)).

As to quaternary structure, interacts with PRKAR2A. Interacts with ACTN2 and DTNBP1/dysbindin. Interacts with DES. Interacts with DMD/dystrophin. Interacts with the calcineurin catalytic subunit PPP3CA. Interacts with TTN. Interacts with CAPN3; this interaction, which results in CMYA5 proteolysis, may protect CAPN3 from autolysis. Interacts with FSD2. Identified in a complex composed of FSD2, CMYA5 and RYR2. In terms of processing, phosphorylated by PKA. In terms of tissue distribution, expressed in skeletal muscle; at a strong level and in heart.

The protein localises to the nucleus. The protein resides in the sarcoplasmic reticulum. It is found in the cytoplasm. Its subcellular location is the perinuclear region. It localises to the myofibril. The protein localises to the sarcomere. The protein resides in the m line. Its function is as follows. May serve as an anchoring protein that mediates the subcellular compartmentation of protein kinase A (PKA) via binding to PRKAR2A. May function as a repressor of calcineurin-mediated transcriptional activity. May attenuate calcineurin ability to induce slow-fiber gene program in muscle and may negatively modulate skeletal muscle regeneration. Plays a role in the assembly of ryanodine receptor (RYR2) clusters in striated muscle. This Homo sapiens (Human) protein is Cardiomyopathy-associated protein 5 (CMYA5).